We begin with the raw amino-acid sequence, 379 residues long: F-box/kelch-repeat protein At4g33900 (379 aa).

One can recognise an F-box domain in the interval Ile-9–Arg-55. Kelch repeat units follow at residues Glu-116–Gly-175, Arg-176–Ser-222, and Ser-262–Lys-308.

The polypeptide is F-box/kelch-repeat protein At4g33900 (Arabidopsis thaliana (Mouse-ear cress)).